We begin with the raw amino-acid sequence, 126 residues long: Holo-[acyl-carrier-protein] synthase (126 aa).

Asp-9 and Glu-58 together coordinate Mg(2+).

Belongs to the P-Pant transferase superfamily. AcpS family. Mg(2+) is required as a cofactor.

The protein localises to the cytoplasm. The catalysed reaction is apo-[ACP] + CoA = holo-[ACP] + adenosine 3',5'-bisphosphate + H(+). Functionally, transfers the 4'-phosphopantetheine moiety from coenzyme A to a Ser of acyl-carrier-protein. This Erwinia tasmaniensis (strain DSM 17950 / CFBP 7177 / CIP 109463 / NCPPB 4357 / Et1/99) protein is Holo-[acyl-carrier-protein] synthase.